The chain runs to 910 residues: Triacylglycerol lipase 4 (910 aa).

A compositionally biased stretch (basic and acidic residues) spans 51–66 (SKDNSDVERVEEDAGK). A disordered region spans residues 51–120 (SKDNSDVERV…TDEGEDERQG (70 aa)). Position 55 is a phosphoserine (Ser-55). The span at 70–85 (TGKNKTTNKVNFNLDT) shows a compositional bias: polar residues. Residues 90-116 (KLDDDQETVTENENNDIEMVETDEGED) are compositionally biased toward acidic residues. The PNPLA domain occupies 282–483 (LVLSGGGTFG…DNDLPISRLS (202 aa)). Residues 286–291 (GGGTFG) carry the GXGXXG motif. A GXSXG motif is present at residues 313 to 317 (GSSAG). The Nucleophile role is filled by Ser-315. Asp-470 serves as the catalytic Proton acceptor. Disordered stretches follow at residues 657–683 (EQTS…DNHI) and 713–777 (SPSG…PILQ). A compositionally biased stretch (polar residues) spans 666-683 (PENSTLLTRTPTKGDNHI). Position 675 is a phosphothreonine; by Cdk1 (Thr-675). A phosphoserine mark is found at Ser-737, Ser-749, Ser-751, and Ser-836. The span at 739–768 (TISTSRRPAKSFSFSVASPTSRMLRQSSKI) shows a compositional bias: polar residues. The tract at residues 874–910 (RRHSIDGRPPSQATKSSPFRSRPSSSTQHKSTTSFTQ) is disordered. Residues 889-899 (SSPFRSRPSSS) show a composition bias toward low complexity. Ser-890 carries the phosphoserine; by Cdk1 modification. Polar residues predominate over residues 900-910 (TQHKSTTSFTQ).

Post-translationally, phosphorylation at Thr-675 and Ser-890 by Cdk1/CDC28 stimulates enzyme activity in vivo.

Its subcellular location is the lipid droplet. It catalyses the reaction a triacylglycerol + H2O = a diacylglycerol + a fatty acid + H(+). The enzyme catalyses 1,2,3-tri-(9Z-octadecenoyl)-glycerol + H2O = di-(9Z)-octadecenoylglycerol + (9Z)-octadecenoate + H(+). The catalysed reaction is 1,2-dihexadecanoyl-sn-glycero-3-phosphocholine + H2O = 1-hexadecanoyl-sn-glycero-3-phosphocholine + hexadecanoate + H(+). It carries out the reaction cholesteryl (9Z-octadecenoate) + H2O = cholesterol + (9Z)-octadecenoate + H(+). It catalyses the reaction 1-(9Z-octadecenoyl)-sn-glycero-3-phosphate + (9Z)-octadecenoyl-CoA = 1,2-di-(9Z-octadecenoyl)-sn-glycero-3-phosphate + CoA. With respect to regulation, phosphorylated and activated by cyclin-dependent kinase 1 (Cdk1/CDC28). Loses its lipolytic activity in cells lacking nonpolar lipids, but retains its side activity as lysophospholipid acyltransferase. Functionally, lipid particle-localized triacylglycerol (TAG) lipase. The lipid droplet/particle is a lipid storage compartment which serves as a depot of energy and building blocks for membrane lipid biosynthesis. Involved in the mobilization of the non-polar storage lipids triacylglycerols (TAGs) from lipid particles by hydrolysis of TAGs, releasing and supplying specific fatty acids to the appropriate metabolic pathways. Also has steryl ester (SE) hydrolase and phospholipase A(2) (PLA(2)) activities, and catalyzes the acylation of lysophosphatidic acid (LPA). Contributes to early bud formation in late G1 phase of the cell cycle upon phosphorylation and activation by cyclin-dependent kinase 1 (Cdk1/CDC28). In Saccharomyces cerevisiae (strain ATCC 204508 / S288c) (Baker's yeast), this protein is Triacylglycerol lipase 4 (TGL4).